Reading from the N-terminus, the 467-residue chain is Light-independent protochlorophyllide reductase subunit N (467 aa).

[4Fe-4S] cluster contacts are provided by cysteine 23, cysteine 48, and cysteine 108.

It belongs to the BchN/ChlN family. Protochlorophyllide reductase is composed of three subunits; ChlL, ChlN and ChlB. Forms a heterotetramer of two ChlB and two ChlN subunits. [4Fe-4S] cluster is required as a cofactor.

It catalyses the reaction chlorophyllide a + oxidized 2[4Fe-4S]-[ferredoxin] + 2 ADP + 2 phosphate = protochlorophyllide a + reduced 2[4Fe-4S]-[ferredoxin] + 2 ATP + 2 H2O. The protein operates within porphyrin-containing compound metabolism; chlorophyll biosynthesis (light-independent). In terms of biological role, component of the dark-operative protochlorophyllide reductase (DPOR) that uses Mg-ATP and reduced ferredoxin to reduce ring D of protochlorophyllide (Pchlide) to form chlorophyllide a (Chlide). This reaction is light-independent. The NB-protein (ChlN-ChlB) is the catalytic component of the complex. This Nostoc sp. (strain PCC 7120 / SAG 25.82 / UTEX 2576) protein is Light-independent protochlorophyllide reductase subunit N.